A 490-amino-acid chain; its full sequence is B3 domain-containing protein LOC_Os12g40080 (490 aa).

Positions 24 to 117 (GKSFIKVMIT…HFKVWIYDPS (94 aa)) form a DNA-binding region, TF-B3 1. The segment at 161–191 (SGHSKETSEINPANSPSWKPTERVPSSEELD) is disordered. Over residues 169-178 (EINPANSPSW) the composition is skewed to polar residues. 2 DNA-binding regions (TF-B3) span residues 236-331 (FYIT…FHPL) and 389-487 (VAVM…IRKS).

The protein resides in the nucleus. The protein is B3 domain-containing protein LOC_Os12g40080 of Oryza sativa subsp. japonica (Rice).